Consider the following 354-residue polypeptide: Holliday junction branch migration complex subunit RuvB (354 aa).

The tract at residues 5 to 197 (TDDFSAADLP…FGIVARLEFY (193 aa)) is large ATPase domain (RuvB-L). Residues Leu36, Arg37, Gly78, Lys81, Thr82, Thr83, 144–146 (EDY), Arg187, Tyr197, and Arg234 contribute to the ATP site. Residue Thr82 coordinates Mg(2+). The segment at 198 to 268 (TAEELGRIVR…IANKALAMLD (71 aa)) is small ATPAse domain (RuvB-S). The segment at 271–354 (PQGFDVMDRK…PPVSGNDMFT (84 aa)) is head domain (RuvB-H). Positions 307, 326, and 331 each coordinate DNA.

The protein belongs to the RuvB family. In terms of assembly, homohexamer. Forms an RuvA(8)-RuvB(12)-Holliday junction (HJ) complex. HJ DNA is sandwiched between 2 RuvA tetramers; dsDNA enters through RuvA and exits via RuvB. An RuvB hexamer assembles on each DNA strand where it exits the tetramer. Each RuvB hexamer is contacted by two RuvA subunits (via domain III) on 2 adjacent RuvB subunits; this complex drives branch migration. In the full resolvosome a probable DNA-RuvA(4)-RuvB(12)-RuvC(2) complex forms which resolves the HJ.

It is found in the cytoplasm. The catalysed reaction is ATP + H2O = ADP + phosphate + H(+). The RuvA-RuvB-RuvC complex processes Holliday junction (HJ) DNA during genetic recombination and DNA repair, while the RuvA-RuvB complex plays an important role in the rescue of blocked DNA replication forks via replication fork reversal (RFR). RuvA specifically binds to HJ cruciform DNA, conferring on it an open structure. The RuvB hexamer acts as an ATP-dependent pump, pulling dsDNA into and through the RuvAB complex. RuvB forms 2 homohexamers on either side of HJ DNA bound by 1 or 2 RuvA tetramers; 4 subunits per hexamer contact DNA at a time. Coordinated motions by a converter formed by DNA-disengaged RuvB subunits stimulates ATP hydrolysis and nucleotide exchange. Immobilization of the converter enables RuvB to convert the ATP-contained energy into a lever motion, pulling 2 nucleotides of DNA out of the RuvA tetramer per ATP hydrolyzed, thus driving DNA branch migration. The RuvB motors rotate together with the DNA substrate, which together with the progressing nucleotide cycle form the mechanistic basis for DNA recombination by continuous HJ branch migration. Branch migration allows RuvC to scan DNA until it finds its consensus sequence, where it cleaves and resolves cruciform DNA. In Polaromonas sp. (strain JS666 / ATCC BAA-500), this protein is Holliday junction branch migration complex subunit RuvB.